The primary structure comprises 338 residues: Holliday junction branch migration complex subunit RuvB (338 aa).

The interval 1 to 181 (MEERILTQNF…FGVINRLDYY (181 aa)) is large ATPase domain (RuvB-L). ATP contacts are provided by residues L20, R21, G62, K65, T66, T67, 128–130 (EDF), R171, Y181, and R218. T66 is a binding site for Mg(2+). The tract at residues 182-252 (SVEELKEIIK…TSKEALDVLG (71 aa)) is small ATPAse domain (RuvB-S). The head domain (RuvB-H) stretch occupies residues 255-338 (EIGLEYIDRK…YIEQGRIEGV (84 aa)). The DNA site is built by R310 and R315.

The protein belongs to the RuvB family. Homohexamer. Forms an RuvA(8)-RuvB(12)-Holliday junction (HJ) complex. HJ DNA is sandwiched between 2 RuvA tetramers; dsDNA enters through RuvA and exits via RuvB. An RuvB hexamer assembles on each DNA strand where it exits the tetramer. Each RuvB hexamer is contacted by two RuvA subunits (via domain III) on 2 adjacent RuvB subunits; this complex drives branch migration. In the full resolvosome a probable DNA-RuvA(4)-RuvB(12)-RuvC(2) complex forms which resolves the HJ.

It localises to the cytoplasm. The enzyme catalyses ATP + H2O = ADP + phosphate + H(+). In terms of biological role, the RuvA-RuvB-RuvC complex processes Holliday junction (HJ) DNA during genetic recombination and DNA repair, while the RuvA-RuvB complex plays an important role in the rescue of blocked DNA replication forks via replication fork reversal (RFR). RuvA specifically binds to HJ cruciform DNA, conferring on it an open structure. The RuvB hexamer acts as an ATP-dependent pump, pulling dsDNA into and through the RuvAB complex. RuvB forms 2 homohexamers on either side of HJ DNA bound by 1 or 2 RuvA tetramers; 4 subunits per hexamer contact DNA at a time. Coordinated motions by a converter formed by DNA-disengaged RuvB subunits stimulates ATP hydrolysis and nucleotide exchange. Immobilization of the converter enables RuvB to convert the ATP-contained energy into a lever motion, pulling 2 nucleotides of DNA out of the RuvA tetramer per ATP hydrolyzed, thus driving DNA branch migration. The RuvB motors rotate together with the DNA substrate, which together with the progressing nucleotide cycle form the mechanistic basis for DNA recombination by continuous HJ branch migration. Branch migration allows RuvC to scan DNA until it finds its consensus sequence, where it cleaves and resolves cruciform DNA. This Thermoanaerobacter pseudethanolicus (strain ATCC 33223 / 39E) (Clostridium thermohydrosulfuricum) protein is Holliday junction branch migration complex subunit RuvB.